A 147-amino-acid polypeptide reads, in one-letter code: MKIWVDADACPGVIREILFRAAQRTGVALTLVANQPVKVPPSPHIRSLQVSAGFDVADNEIVRRVSAGDLVITSDIPLAAEVIAKGGHALSPRGELHTRENIGARLNMRDFMDTLRASGIQSGGPPALNQKDRQAFANQLDRLLAKR.

Belongs to the UPF0178 family.

The chain is UPF0178 protein Tgr7_2584 from Thioalkalivibrio sulfidiphilus (strain HL-EbGR7).